The chain runs to 387 residues: Succinate--CoA ligase [ADP-forming] subunit beta (387 aa).

The ATP-grasp domain occupies 9 to 236; it reads KELFAKHNVP…RAATDPLELK (228 aa). Residues Lys-45, 52 to 54, Ser-94, and Glu-99 each bind ATP; that span reads GRG. Residues Asn-191 and Asp-205 each contribute to the Mg(2+) site. Substrate-binding positions include Asn-256 and 318-320; that span reads GIT.

The protein belongs to the succinate/malate CoA ligase beta subunit family. In terms of assembly, heterotetramer of two alpha and two beta subunits. Requires Mg(2+) as cofactor.

It catalyses the reaction succinate + ATP + CoA = succinyl-CoA + ADP + phosphate. The enzyme catalyses GTP + succinate + CoA = succinyl-CoA + GDP + phosphate. It functions in the pathway carbohydrate metabolism; tricarboxylic acid cycle; succinate from succinyl-CoA (ligase route): step 1/1. In terms of biological role, succinyl-CoA synthetase functions in the citric acid cycle (TCA), coupling the hydrolysis of succinyl-CoA to the synthesis of either ATP or GTP and thus represents the only step of substrate-level phosphorylation in the TCA. The beta subunit provides nucleotide specificity of the enzyme and binds the substrate succinate, while the binding sites for coenzyme A and phosphate are found in the alpha subunit. The sequence is that of Succinate--CoA ligase [ADP-forming] subunit beta from Mycobacterium bovis (strain ATCC BAA-935 / AF2122/97).